A 477-amino-acid chain; its full sequence is Aspartyl/glutamyl-tRNA(Asn/Gln) amidotransferase subunit B (477 aa).

Belongs to the GatB/GatE family. GatB subfamily. In terms of assembly, heterotrimer of A, B and C subunits.

The enzyme catalyses L-glutamyl-tRNA(Gln) + L-glutamine + ATP + H2O = L-glutaminyl-tRNA(Gln) + L-glutamate + ADP + phosphate + H(+). It carries out the reaction L-aspartyl-tRNA(Asn) + L-glutamine + ATP + H2O = L-asparaginyl-tRNA(Asn) + L-glutamate + ADP + phosphate + 2 H(+). Functionally, allows the formation of correctly charged Asn-tRNA(Asn) or Gln-tRNA(Gln) through the transamidation of misacylated Asp-tRNA(Asn) or Glu-tRNA(Gln) in organisms which lack either or both of asparaginyl-tRNA or glutaminyl-tRNA synthetases. The reaction takes place in the presence of glutamine and ATP through an activated phospho-Asp-tRNA(Asn) or phospho-Glu-tRNA(Gln). This is Aspartyl/glutamyl-tRNA(Asn/Gln) amidotransferase subunit B from Ureaplasma parvum serovar 3 (strain ATCC 27815 / 27 / NCTC 11736).